The primary structure comprises 613 residues: WD40 repeat-containing protein HOS15 (613 aa).

Positions 5–37 constitute a LisH domain; sequence TSVELNFLVFRYLQESGFTHAAFTLGYEAGINK. 2 disordered regions span residues 101-174 and 193-214; these read KKRK…REKM and EIER…KQLG. WD repeat units lie at residues 263–302, 322–362, 363–402, 405–443, 446–485, 488–536, 539–580, and 582–613; these read GHTS…FKAV, EKSK…STLS, KHKG…WKQQ, FHSG…PAKT, GHQG…FVHD, EHTK…MLCS, GHRE…KTYT, and NGGI…DFRM.

Its subcellular location is the nucleus. In terms of biological role, acts as a repressor of cold stress-regulated gene expression. Interacts specifically with and promotes deacetylation of histone H4. Plays a role in gene regulation for plant acclimation and tolerance to cold stress. This is WD40 repeat-containing protein HOS15 from Arabidopsis thaliana (Mouse-ear cress).